A 131-amino-acid polypeptide reads, in one-letter code: Small ribosomal subunit protein uS11 (131 aa).

It belongs to the universal ribosomal protein uS11 family. As to quaternary structure, part of the 30S ribosomal subunit. Interacts with proteins S7 and S18. Binds to IF-3.

Located on the platform of the 30S subunit, it bridges several disparate RNA helices of the 16S rRNA. Forms part of the Shine-Dalgarno cleft in the 70S ribosome. This chain is Small ribosomal subunit protein uS11, found in Helicobacter pylori (strain G27).